The sequence spans 227 residues: Probable GTP-binding protein EngB (227 aa).

One can recognise an EngB-type G domain in the interval 41 to 216 (GRPEVAFAGR…RAEIARFAVP (176 aa)). GTP is bound by residues 49 to 56 (GRSNVGKS), 76 to 80 (GRTKQ), 94 to 97 (DMPG), 161 to 164 (TKCD), and 195 to 197 (TSS). 2 residues coordinate Mg(2+): S56 and T78.

Belongs to the TRAFAC class TrmE-Era-EngA-EngB-Septin-like GTPase superfamily. EngB GTPase family. Mg(2+) serves as cofactor.

Necessary for normal cell division and for the maintenance of normal septation. This Gluconobacter oxydans (strain 621H) (Gluconobacter suboxydans) protein is Probable GTP-binding protein EngB.